An 873-amino-acid chain; its full sequence is Alanine--tRNA ligase (873 aa).

Histidine 559, histidine 563, cysteine 661, and histidine 665 together coordinate Zn(2+).

The protein belongs to the class-II aminoacyl-tRNA synthetase family. In terms of assembly, homotetramer. Requires Zn(2+) as cofactor.

The protein resides in the cytoplasm. The enzyme catalyses tRNA(Ala) + L-alanine + ATP = L-alanyl-tRNA(Ala) + AMP + diphosphate. Catalyzes the attachment of alanine to tRNA(Ala) in a two-step reaction: alanine is first activated by ATP to form Ala-AMP and then transferred to the acceptor end of tRNA(Ala). Also edits incorrectly charged Ser-tRNA(Ala) and Gly-tRNA(Ala) via its editing domain. The protein is Alanine--tRNA ligase of Wigglesworthia glossinidia brevipalpis.